The primary structure comprises 765 residues: Protein transport protein Sec23A (765 aa).

Thr2 bears the N-acetylthreonine mark. Residues Cys61, Cys66, Cys85, and Cys88 each contribute to the Zn(2+) site. The residue at position 308 (Thr308) is a Phosphothreonine. The stretch at 632 to 718 (PEPVLLDSSS…EHGGSQARFL (87 aa)) is one Gelsolin-like repeat.

It belongs to the SEC23/SEC24 family. SEC23 subfamily. COPII is composed of at least five proteins: the Sec23/24 complex, the Sec13/31 complex and Sar1. Interacts with SEC23IP. Interacts with HTR4. Interacts with SEC16A. Interacts with SLC6A4. Interacts (as part of the Sec23/24 complex) with SEC22B; recruits SEC22B into COPII-coated vesicles and allows the transport of this cargo from the endoplasmic reticulum to the Golgi. Interacts (via Gelsolin-like repeat) with MIA2 and MIA3; specifically involved in the transport of large cargos like the collagen COL7A1. Interacts with DDHD1. Interacts with TMEM39A. Interacts with SACM1L; this interaction is reduced in the absence of TMEM39A. Interacts with kinase FAM20C; transport of FAM20C from the endoplasmic reticulum to the Golgi is likely to be mediated by COPII vesicles.

It is found in the cytoplasmic vesicle. The protein resides in the COPII-coated vesicle membrane. Its subcellular location is the endoplasmic reticulum membrane. It localises to the cytoplasm. The protein localises to the cytosol. Functionally, component of the coat protein complex II (COPII) which promotes the formation of transport vesicles from the endoplasmic reticulum (ER). The coat has two main functions, the physical deformation of the endoplasmic reticulum membrane into vesicles and the selection of cargo molecules for their transport to the Golgi complex. Required for the translocation of insulin-induced glucose transporter SLC2A4/GLUT4 to the cell membrane. The polypeptide is Protein transport protein Sec23A (Pongo abelii (Sumatran orangutan)).